Here is a 535-residue protein sequence, read N- to C-terminus: Probable monogalactosyldiacylglycerol synthase, chloroplastic (535 aa).

Residues 1 to 113 (MMQHSSSVTQ…KIPLGFASVG (113 aa)) constitute a chloroplast transit peptide.

This sequence belongs to the glycosyltransferase 28 family.

It is found in the plastid. Its subcellular location is the chloroplast membrane. It catalyses the reaction a 1,2-diacyl-sn-glycerol + UDP-alpha-D-galactose = a 1,2-diacyl-3-O-(beta-D-galactosyl)-sn-glycerol + UDP + H(+). Involved in the synthesis of the major structural component of photosynthetic membranes. The polypeptide is Probable monogalactosyldiacylglycerol synthase, chloroplastic (MGD A) (Nicotiana tabacum (Common tobacco)).